The following is a 118-amino-acid chain: Probable non-functional immunoglobulin lambda variable 1-50 (118 aa).

An N-terminal signal peptide occupies residues 1–19; that stretch reads MAWSSLLLTLLAHCTGSWA. The segment at 20–44 is framework-1; that stretch reads QSVLTQPPSVSGAPGQRVTISCTGS. Residues 20-118 form the Ig-like domain; sequence QSVLTQPPSV…CKAWDNSLNA (99 aa). Cys41 and Cys109 are joined by a disulfide. Residues 45–53 form a complementarity-determining-1 region; sequence SSNIGAGYV. The interval 54–70 is framework-2; it reads VHWYQQLPGTAPKLLIY. The interval 71-73 is complementarity-determining-2; sequence GNS. The interval 74–109 is framework-3; that stretch reads NRPSGVPDQFSGSKSGTSASLAITGLQSEDEADYYC. Residues 110–118 form a complementarity-determining-3 region; that stretch reads KAWDNSLNA.

As to quaternary structure, immunoglobulins are composed of two identical heavy chains and two identical light chains; disulfide-linked.

The protein resides in the secreted. It localises to the cell membrane. Its function is as follows. Probable non-functional open reading frame (ORF) of V region of the variable domain of immunoglobulin light chains. Non-functional ORF generally cannot participate in the synthesis of a productive immunoglobulin chain due to altered V-(D)-J or switch recombination and/or splicing site (at mRNA level) and/or conserved amino acid change (protein level). Immunoglobulins, also known as antibodies, are membrane-bound or secreted glycoproteins produced by B lymphocytes. In the recognition phase of humoral immunity, the membrane-bound immunoglobulins serve as receptors which, upon binding of a specific antigen, trigger the clonal expansion and differentiation of B lymphocytes into immunoglobulins-secreting plasma cells. Secreted immunoglobulins mediate the effector phase of humoral immunity, which results in the elimination of bound antigens. The antigen binding site is formed by the variable domain of one heavy chain, together with that of its associated light chain. Thus, each immunoglobulin has two antigen binding sites with remarkable affinity for a particular antigen. The variable domains are assembled by a process called V-(D)-J rearrangement and can then be subjected to somatic hypermutations which, after exposure to antigen and selection, allow affinity maturation for a particular antigen. The protein is Probable non-functional immunoglobulin lambda variable 1-50 of Homo sapiens (Human).